The chain runs to 504 residues: Sphingosine-1-phosphate transporter SPNS2 (504 aa).

11 helical membrane passes run 48–70, 94–114, 122–142, 182–202, 214–234, 269–289, 317–337, 351–371, 375–395, 415–435, and 460–480; these read LLRC…LNYM, GLLQ…FGYL, IILS…SFIT, VMLS…YILG, WALR…LIFV, VFSS…GIWI, LIFG…GAVT, LVCA…FVVA, IVGA…NWAI, FQGF…IGLI, and LCPF…LFFL.

This sequence belongs to the major facilitator superfamily. Spinster (TC 2.A.1.49) family.

Its subcellular location is the cell membrane. The protein localises to the endosome membrane. It carries out the reaction sphing-4-enine 1-phosphate(in) = sphing-4-enine 1-phosphate(out). The enzyme catalyses sphinganine 1-phosphate(in) = sphinganine 1-phosphate(out). Functionally, lipid transporter that specifically mediates export of sphingosine-1-phosphate (sphing-4-enine 1-phosphate, S1P) and sphinganine-1-phosphate, which play critical roles in regulating heart development. Mediates the export of S1P from cells in the extraembryonic yolk syncytial layer (YSL), thereby regulating myocardial precursor migration. The polypeptide is Sphingosine-1-phosphate transporter SPNS2 (Danio rerio (Zebrafish)).